Here is a 200-residue protein sequence, read N- to C-terminus: dITP/XTP pyrophosphatase (200 aa).

Residue 8-13 (TGNQGK) participates in substrate binding. Asp-69 serves as the catalytic Proton acceptor. Asp-69 is a binding site for Mg(2+). Residues Ser-70, 154–157 (FGYD), Lys-177, and 182–183 (HR) each bind substrate.

Belongs to the HAM1 NTPase family. As to quaternary structure, homodimer. It depends on Mg(2+) as a cofactor.

It carries out the reaction XTP + H2O = XMP + diphosphate + H(+). It catalyses the reaction dITP + H2O = dIMP + diphosphate + H(+). The catalysed reaction is ITP + H2O = IMP + diphosphate + H(+). Pyrophosphatase that catalyzes the hydrolysis of nucleoside triphosphates to their monophosphate derivatives, with a high preference for the non-canonical purine nucleotides XTP (xanthosine triphosphate), dITP (deoxyinosine triphosphate) and ITP. Seems to function as a house-cleaning enzyme that removes non-canonical purine nucleotides from the nucleotide pool, thus preventing their incorporation into DNA/RNA and avoiding chromosomal lesions. The chain is dITP/XTP pyrophosphatase from Vibrio vulnificus (strain CMCP6).